A 510-amino-acid polypeptide reads, in one-letter code: NAD(P)H-quinone oxidoreductase subunit 2 A, chloroplastic (510 aa).

Transmembrane regions (helical) follow at residues 24–44 (LLLF…GLIL), 57–77 (MPWL…ALLF), 99–119 (IFQF…VEYI), 124–144 (MAIT…MFLC), 149–169 (LITI…LSGY), 183–203 (YLLM…WLYG), 227–247 (PGIS…LSPA), 295–315 (WHLL…LIAI), 323–343 (MLAY…IVGD), 354–374 (YMLF…LFGL), 395–415 (ALSL…AGFF), 418–438 (LHLF…IGLL), and 482–502 (LSMI…SPII).

The protein belongs to the complex I subunit 2 family. In terms of assembly, NDH is composed of at least 16 different subunits, 5 of which are encoded in the nucleus.

It localises to the plastid. It is found in the chloroplast thylakoid membrane. The enzyme catalyses a plastoquinone + NADH + (n+1) H(+)(in) = a plastoquinol + NAD(+) + n H(+)(out). The catalysed reaction is a plastoquinone + NADPH + (n+1) H(+)(in) = a plastoquinol + NADP(+) + n H(+)(out). Functionally, NDH shuttles electrons from NAD(P)H:plastoquinone, via FMN and iron-sulfur (Fe-S) centers, to quinones in the photosynthetic chain and possibly in a chloroplast respiratory chain. The immediate electron acceptor for the enzyme in this species is believed to be plastoquinone. Couples the redox reaction to proton translocation, and thus conserves the redox energy in a proton gradient. In Populus trichocarpa (Western balsam poplar), this protein is NAD(P)H-quinone oxidoreductase subunit 2 A, chloroplastic.